A 763-amino-acid chain; its full sequence is Phosphoglycerol transferase I (763 aa).

The next 4 helical transmembrane spans lie at 1–21, 26–46, 77–97, and 108–128; these read MSELLSFALFLASVLIYAWKA, WWFAATLTVLGLFVVLNITLF, ILPGIGIVLGLAAVFGALGWI, and FGYSLLALLLALGSVDASPAF.

The protein belongs to the OpgB family.

It localises to the cell inner membrane. It carries out the reaction a phosphatidylglycerol + a membrane-derived-oligosaccharide D-glucose = a 1,2-diacyl-sn-glycerol + a membrane-derived-oligosaccharide 6-(glycerophospho)-D-glucose.. The protein operates within glycan metabolism; osmoregulated periplasmic glucan (OPG) biosynthesis. In terms of biological role, transfers a phosphoglycerol residue from phosphatidylglycerol to the membrane-bound nascent glucan backbones. The chain is Phosphoglycerol transferase I from Escherichia coli O6:K15:H31 (strain 536 / UPEC).